The primary structure comprises 825 residues: E3 ubiquitin-protein ligase ICP0 (825 aa).

Residues 1–10 show a composition bias toward polar residues; it reads MEPRPGTSSR. The segment at 1–121 is disordered; the sequence is MEPRPGTSSR…VGEEEAEAGG (121 aa). Residues 46–57 show a composition bias toward acidic residues; it reads DSEEETEVGISD. The RING-type zinc finger occupies 126–167; the sequence is CAVCTDEIAPPLRCQSFPCLHPFCIPCMKTWIPLRNTCPLCN. Disordered stretches follow at residues 221–312, 325–683, and 803–825; these read RSLS…GGGP, PPAA…PAPG, and RHPW…GHGE. Positions 242–251 are enriched in acidic residues; sequence TDDEDDDLAD. Composition is skewed to low complexity over residues 273 to 283, 290 to 303, and 350 to 367; these read TRGTSQPAATR, PRSS…LRAG, and PPAR…VISD. A compositionally biased stretch (pro residues) spans 368 to 379; sequence SPPPSPRRPAGP. Composition is skewed to low complexity over residues 380-394 and 402-439; these read GPLS…QVSS and PQSS…DAAG. Over residues 456-468 the composition is skewed to polar residues; that stretch reads RMTQAQTDTQAQS. Residues 479-491 show a composition bias toward gly residues; that stretch reads GSGGPGAEGGPGV. 2 stretches are compositionally biased toward low complexity: residues 492–510 and 519–540; these read PRGT…GAAA and DSGP…PLAP. The segment covering 552 to 563 has biased composition (basic and acidic residues); that stretch reads RAPDSDSGDRGH. The segment covering 567–641 has biased composition (low complexity); the sequence is APASAGAAPP…GGSVASASGA (75 aa). The span at 658-667 shows a compositional bias: basic residues; the sequence is GPRKCARKTR. Residues 811 to 825 are compositionally biased toward low complexity; that stretch reads GAPAPAGDAPAGHGE.

Auto-ubiquitinated.

It carries out the reaction S-ubiquitinyl-[E2 ubiquitin-conjugating enzyme]-L-cysteine + [acceptor protein]-L-lysine = [E2 ubiquitin-conjugating enzyme]-L-cysteine + N(6)-ubiquitinyl-[acceptor protein]-L-lysine.. Its function is as follows. Evades nuclear antiviral defenses triggered by dsDNA viruses. Acts during the initial stages of lytic infection and the reactivation of latent viral genome. Prevents the antiviral effect of nuclear bodies by degrading host PML and SP100. Prevents antiviral response to viral DNA induced by IFI16 by degrading it. Additionally, inhibits host IRF3 nuclear signaling to prevent interferon production by the infected cells. This is E3 ubiquitin-protein ligase ICP0 (RL2) from Homo sapiens (Human).